The chain runs to 445 residues: Phosphoglucosamine mutase (445 aa).

The active-site Phosphoserine intermediate is S99. 4 residues coordinate Mg(2+): S99, D242, D244, and D246. Position 99 is a phosphoserine (S99).

This sequence belongs to the phosphohexose mutase family. The cofactor is Mg(2+). Post-translationally, activated by phosphorylation.

It carries out the reaction alpha-D-glucosamine 1-phosphate = D-glucosamine 6-phosphate. In terms of biological role, catalyzes the conversion of glucosamine-6-phosphate to glucosamine-1-phosphate. This Sulfurovum sp. (strain NBC37-1) protein is Phosphoglucosamine mutase.